A 122-amino-acid chain; its full sequence is Large ribosomal subunit protein uL14 (122 aa).

Belongs to the universal ribosomal protein uL14 family. As to quaternary structure, part of the 50S ribosomal subunit. Forms a cluster with proteins L3 and L19. In the 70S ribosome, L14 and L19 interact and together make contacts with the 16S rRNA in bridges B5 and B8.

In terms of biological role, binds to 23S rRNA. Forms part of two intersubunit bridges in the 70S ribosome. The sequence is that of Large ribosomal subunit protein uL14 from Oenococcus oeni (strain ATCC BAA-331 / PSU-1).